The sequence spans 229 residues: Urease accessory protein UreF (229 aa).

Belongs to the UreF family. UreD, UreF and UreG form a complex that acts as a GTP-hydrolysis-dependent molecular chaperone, activating the urease apoprotein by helping to assemble the nickel containing metallocenter of UreC. The UreE protein probably delivers the nickel.

It localises to the cytoplasm. Its function is as follows. Required for maturation of urease via the functional incorporation of the urease nickel metallocenter. The chain is Urease accessory protein UreF from Staphylococcus aureus (strain MRSA252).